The chain runs to 157 residues: UPF0251 protein CLJ_B1488 (157 aa).

This sequence belongs to the UPF0251 family.

This chain is UPF0251 protein CLJ_B1488, found in Clostridium botulinum (strain 657 / Type Ba4).